A 185-amino-acid polypeptide reads, in one-letter code: Elongation factor P (185 aa).

The protein belongs to the elongation factor P family.

Its subcellular location is the cytoplasm. It functions in the pathway protein biosynthesis; polypeptide chain elongation. Involved in peptide bond synthesis. Stimulates efficient translation and peptide-bond synthesis on native or reconstituted 70S ribosomes in vitro. Probably functions indirectly by altering the affinity of the ribosome for aminoacyl-tRNA, thus increasing their reactivity as acceptors for peptidyl transferase. The chain is Elongation factor P from Rippkaea orientalis (strain PCC 8801 / RF-1) (Cyanothece sp. (strain PCC 8801)).